The chain runs to 373 residues: Queuine tRNA-ribosyltransferase (373 aa).

The Proton acceptor role is filled by D93. Substrate is bound by residues 93 to 97, D147, Q191, and G218; that span reads DSGGF. Positions 249-255 are RNA binding; the sequence is GVGAPRD. D268 functions as the Nucleophile in the catalytic mechanism. Residues 273-277 are RNA binding; important for wobble base 34 recognition; that stretch reads TRNAR. Zn(2+) is bound by residues C306, C308, C311, and H337.

This sequence belongs to the queuine tRNA-ribosyltransferase family. As to quaternary structure, homodimer. Within each dimer, one monomer is responsible for RNA recognition and catalysis, while the other monomer binds to the replacement base PreQ1. Zn(2+) serves as cofactor.

The catalysed reaction is 7-aminomethyl-7-carbaguanine + guanosine(34) in tRNA = 7-aminomethyl-7-carbaguanosine(34) in tRNA + guanine. It participates in tRNA modification; tRNA-queuosine biosynthesis. In terms of biological role, catalyzes the base-exchange of a guanine (G) residue with the queuine precursor 7-aminomethyl-7-deazaguanine (PreQ1) at position 34 (anticodon wobble position) in tRNAs with GU(N) anticodons (tRNA-Asp, -Asn, -His and -Tyr). Catalysis occurs through a double-displacement mechanism. The nucleophile active site attacks the C1' of nucleotide 34 to detach the guanine base from the RNA, forming a covalent enzyme-RNA intermediate. The proton acceptor active site deprotonates the incoming PreQ1, allowing a nucleophilic attack on the C1' of the ribose to form the product. After dissociation, two additional enzymatic reactions on the tRNA convert PreQ1 to queuine (Q), resulting in the hypermodified nucleoside queuosine (7-(((4,5-cis-dihydroxy-2-cyclopenten-1-yl)amino)methyl)-7-deazaguanosine). In Solidesulfovibrio magneticus (strain ATCC 700980 / DSM 13731 / RS-1) (Desulfovibrio magneticus), this protein is Queuine tRNA-ribosyltransferase.